A 219-amino-acid chain; its full sequence is Proline-rich protein 27 (219 aa).

A signal peptide spans 1-15; that stretch reads MKLLLWACIVCVAFA. Over residues 155–204 the composition is skewed to low complexity; it reads AAEPAAEAPVGAEPAAEAPVAAEPAAEAPVGVEPAAEEPSPAEPATAKPA. Residues 155-219 form a disordered region; sequence AAEPAAEAPV…PSPSLEQANQ (65 aa).

Its subcellular location is the secreted. This is Proline-rich protein 27 (PRR27) from Homo sapiens (Human).